The sequence spans 583 residues: Threonine--tRNA ligase (583 aa).

Residues 185–478 (DHRKLGRELN…LVEHYGGAFP (294 aa)) form a catalytic region. Zn(2+)-binding residues include Cys278, His329, and His455.

The protein belongs to the class-II aminoacyl-tRNA synthetase family. In terms of assembly, homodimer. The cofactor is Zn(2+).

The protein resides in the cytoplasm. The catalysed reaction is tRNA(Thr) + L-threonine + ATP = L-threonyl-tRNA(Thr) + AMP + diphosphate + H(+). Its function is as follows. Catalyzes the attachment of threonine to tRNA(Thr) in a two-step reaction: L-threonine is first activated by ATP to form Thr-AMP and then transferred to the acceptor end of tRNA(Thr). Also edits incorrectly charged L-seryl-tRNA(Thr). This is Threonine--tRNA ligase from Borrelia duttonii (strain Ly).